Consider the following 102-residue polypeptide: Ferredoxin, 2Fe-2S (102 aa).

[2Fe-2S] cluster contacts are provided by cysteine 11, cysteine 24, cysteine 56, and cysteine 60.

It belongs to the 2Fe2S Shethna-type ferredoxin family. [2Fe-2S] cluster serves as cofactor.

In terms of biological role, ferredoxins are iron-sulfur proteins that transfer electrons in a wide variety of metabolic reactions. The protein is Ferredoxin, 2Fe-2S of Clostridium pasteurianum.